Consider the following 180-residue polypeptide: Symerythrin (180 aa).

Residues 17 to 127 constitute a cross-link (3-(L-phenylalan-2'-yl)-L-valine (Phe-Val)); sequence FQDAVSHNNT…RRALETALEV (111 aa). Positions 21–180 constitute a Ferritin-like diiron domain; the sequence is VSHNNTDANA…RALENLLEVA (160 aa). 7 residues coordinate Fe(3+): Glu37, Glu40, Glu71, Glu128, Glu131, Glu162, and His165.

In terms of assembly, monomer. It depends on Fe(3+) as a cofactor.

Its subcellular location is the plastid. The protein localises to the cyanelle. Exhibits oxidase-like and peroxidase-like activities in vitro. This chain is Symerythrin, found in Cyanophora paradoxa.